The following is a 740-amino-acid chain: Ion-translocating oxidoreductase complex subunit C (740 aa).

2 consecutive 4Fe-4S ferredoxin-type domains span residues 369–397 and 407–436; these read GEPQEEQSCIRCSACADACPADLLPQQLY and KATTHNIADCIECGACAWVCPSNIPLVQYF. [4Fe-4S] cluster is bound by residues Cys-377, Cys-380, Cys-383, Cys-387, Cys-416, Cys-419, Cys-422, and Cys-426. 3 disordered regions span residues 602–652, 664–685, and 695–714; these read KLEQ…DPRK, ARKLEQQQANAEPEEQVDPRKA, and KARKLEQQQANAEPEEQVDP. Positions 605-615 are enriched in low complexity; it reads QQQANAEPEQQ.

It belongs to the 4Fe4S bacterial-type ferredoxin family. RnfC subfamily. In terms of assembly, the complex is composed of six subunits: RsxA, RsxB, RsxC, RsxD, RsxE and RsxG. The cofactor is [4Fe-4S] cluster.

It localises to the cell inner membrane. Functionally, part of a membrane-bound complex that couples electron transfer with translocation of ions across the membrane. Required to maintain the reduced state of SoxR. This chain is Ion-translocating oxidoreductase complex subunit C, found in Escherichia coli O157:H7.